Here is a 386-residue protein sequence, read N- to C-terminus: Tryptophan--tRNA ligase (386 aa).

The 'HIGH' region motif lies at 82–90; sequence PSGPMHIGH. The short motif at 253-257 is the 'KMSKS' region element; it reads KMSAS.

This sequence belongs to the class-I aminoacyl-tRNA synthetase family.

It is found in the cytoplasm. The catalysed reaction is tRNA(Trp) + L-tryptophan + ATP = L-tryptophyl-tRNA(Trp) + AMP + diphosphate + H(+). In Pyrococcus horikoshii (strain ATCC 700860 / DSM 12428 / JCM 9974 / NBRC 100139 / OT-3), this protein is Tryptophan--tRNA ligase.